A 421-amino-acid polypeptide reads, in one-letter code: Serine--tRNA ligase (421 aa).

Position 225-227 (225-227 (TAE)) interacts with L-serine. Residues 256 to 258 (RSE) and V272 each bind ATP. E279 contacts L-serine. Residue 345–348 (ETHS) participates in ATP binding. Residue T380 participates in L-serine binding.

The protein belongs to the class-II aminoacyl-tRNA synthetase family. Type-1 seryl-tRNA synthetase subfamily. In terms of assembly, homodimer. The tRNA molecule binds across the dimer.

Its subcellular location is the cytoplasm. It catalyses the reaction tRNA(Ser) + L-serine + ATP = L-seryl-tRNA(Ser) + AMP + diphosphate + H(+). The catalysed reaction is tRNA(Sec) + L-serine + ATP = L-seryl-tRNA(Sec) + AMP + diphosphate + H(+). Its pathway is aminoacyl-tRNA biosynthesis; selenocysteinyl-tRNA(Sec) biosynthesis; L-seryl-tRNA(Sec) from L-serine and tRNA(Sec): step 1/1. Its function is as follows. Catalyzes the attachment of serine to tRNA(Ser). Is also able to aminoacylate tRNA(Sec) with serine, to form the misacylated tRNA L-seryl-tRNA(Sec), which will be further converted into selenocysteinyl-tRNA(Sec). The chain is Serine--tRNA ligase from Thermus thermophilus (strain ATCC 27634 / DSM 579 / HB8).